We begin with the raw amino-acid sequence, 89 residues long: Myrmicitoxin(1)-Pr2c (89 aa).

The first 23 residues, 1 to 23, serve as a signal peptide directing secretion; it reads MEIPKLLYIAVIAIGLSGSLTCA. A propeptide spanning residues 24–61 is cleaved from the precursor; it reads TPLANPWADPEAEANPKAKATAEATAEAIAEALAEPEP. N88 bears the Asparagine amide mark.

It belongs to the formicidae venom clade 1 family. As to expression, expressed by the venom gland.

It is found in the secreted. Vertebrate-selective toxin that causes pain by targeting voltage-gated sodium channels. This chain is Myrmicitoxin(1)-Pr2c, found in Pogonomyrmex rugosus (Desert harvester ant).